The following is a 515-amino-acid chain: Cytochrome P450 1A1 (515 aa).

F225 provides a ligand contact to substrate. Heme is bound at residue C459.

Belongs to the cytochrome P450 family. It depends on heme as a cofactor.

It is found in the endoplasmic reticulum membrane. The protein localises to the microsome membrane. The catalysed reaction is an organic molecule + reduced [NADPH--hemoprotein reductase] + O2 = an alcohol + oxidized [NADPH--hemoprotein reductase] + H2O + H(+). In terms of biological role, cytochromes P450 are a group of heme-thiolate monooxygenases. They oxidize a variety of structurally unrelated compounds, including steroids, fatty acids, and xenobiotics. This Microgadus tomcod (Atlantic tomcod) protein is Cytochrome P450 1A1 (cyp1a1).